A 150-amino-acid chain; its full sequence is Small ribosomal subunit protein uS15 (150 aa).

Basic residues predominate over residues 1 to 10; sequence MPHRSRHKRG. A disordered region spans residues 1–21; it reads MPHRSRHKRGSSGSVRPATKT.

This sequence belongs to the universal ribosomal protein uS15 family. In terms of assembly, part of the 30S ribosomal subunit.

This Caldivirga maquilingensis (strain ATCC 700844 / DSM 13496 / JCM 10307 / IC-167) protein is Small ribosomal subunit protein uS15.